Consider the following 303-residue polypeptide: N-acetyl-D-glucosamine kinase (303 aa).

ATP-binding positions include 4 to 11 and 133 to 140; these read GFDIGGTK and GVGGGLVL. 4 residues coordinate Zn(2+): H157, C177, C179, and C184.

It belongs to the ROK (NagC/XylR) family. NagK subfamily.

It carries out the reaction N-acetyl-D-glucosamine + ATP = N-acetyl-D-glucosamine 6-phosphate + ADP + H(+). The protein operates within cell wall biogenesis; peptidoglycan recycling. Its function is as follows. Catalyzes the phosphorylation of N-acetyl-D-glucosamine (GlcNAc) derived from cell-wall degradation, yielding GlcNAc-6-P. In Salmonella paratyphi A (strain ATCC 9150 / SARB42), this protein is N-acetyl-D-glucosamine kinase.